Consider the following 98-residue polypeptide: MGEKDIIRDLYEVILDRRQKQPDGSYTAYLFEQGEDKILKKIGEEAAEVLIAAKNGGGAALVGEMADLVYHLLVLLAWHGLAPEDVLAELAARRQKKS.

Belongs to the PRA-PH family.

Its subcellular location is the cytoplasm. The catalysed reaction is 1-(5-phospho-beta-D-ribosyl)-ATP + H2O = 1-(5-phospho-beta-D-ribosyl)-5'-AMP + diphosphate + H(+). It functions in the pathway amino-acid biosynthesis; L-histidine biosynthesis; L-histidine from 5-phospho-alpha-D-ribose 1-diphosphate: step 2/9. The polypeptide is Phosphoribosyl-ATP pyrophosphatase (Pelotomaculum thermopropionicum (strain DSM 13744 / JCM 10971 / SI)).